We begin with the raw amino-acid sequence, 164 residues long: Vasopressin-neurophysin 2-copeptin (164 aa).

A signal peptide spans methionine 1 to alanine 19. Cysteine 20 and cysteine 25 are oxidised to a cystine. Glycine amide is present on glycine 28. Intrachain disulfides connect cysteine 41–cysteine 85, cysteine 44–cysteine 58, cysteine 52–cysteine 75, cysteine 59–cysteine 65, cysteine 92–cysteine 104, cysteine 98–cysteine 116, and cysteine 105–cysteine 110. A glycan (N-linked (GlcNAc...) asparagine) is linked at asparagine 131.

The protein belongs to the vasopressin/oxytocin family. In terms of assembly, interacts with vasopressin receptors V1bR/AVPR1B (Ki=85 pM), V1aR/AVPR1A (Ki=0.6 nM) and V2R/AVPR2 (Ki=4.9 nM). Interacts with oxytocin receptor (OXTR) (Ki=110 nM). (Microbial infection) May interact with SARS coronavirus-2/SARS-CoV-2; they may form a complex with secreted ACE2.

The protein resides in the secreted. Specifically binds vasopressin. In terms of biological role, has a direct antidiuretic action on the kidney, it also causes vasoconstriction of the peripheral vessels. Acts by binding to vasopressin receptors (V1bR/AVPR1B, V1aR/AVPR1A, and V2R/AVPR2). In Homo sapiens (Human), this protein is Vasopressin-neurophysin 2-copeptin (AVP).